Here is a 618-residue protein sequence, read N- to C-terminus: Sodium/iodide cotransporter (618 aa).

Residues 1–14 (MEGAEAGARATFGA) lie on the Extracellular side of the membrane. A helical membrane pass occupies residues 15–31 (WDYGVFATMLLVSTGIG). Topologically, residues 32–56 (LWVGLARGGQRSADDFFTGGRQLAA) are cytoplasmic. The chain crosses the membrane as a discontinuously helical span at residues 57 to 80 (VPVGLSLAASFMSAVQVLGVPAEA). Na(+) is bound by residues Ser69, Val71, and Gln72. Iodide is bound at residue Val76. Residues 81 to 84 (ARYG) are Extracellular-facing. The helical transmembrane segment at 85 to 105 (LKFLWMCAGQLLNSLLTAFLF) threads the bilayer. Met90 serves as a coordination point for iodide. At 106–130 (LPIFYRLGLTSTYQYLELRFSRAVR) the chain is on the cytoplasmic side. A helical membrane pass occupies residues 131–157 (LCGTLQYLVATMLYTGIVIYAPALILN). Residue Tyr144 participates in Na(+) binding. The Extracellular segment spans residues 158 to 163 (QVTGLD). The helical transmembrane segment at 164 to 181 (IWASLLSTGIICTLYTTV) threads the bilayer. Residues 182 to 189 (GGMKAVVW) are Cytoplasmic-facing. Residues 190-208 (TDVFQVVVMLVGFWVILAR) traverse the membrane as a helical segment. Residues 209–243 (GVILLGGPRNVLSLAQNHSRINLMDFDPDPRSRYT) lie on the Extracellular side of the membrane. Residues 244-266 (FWTFIVGGTLVWLSMYGVNQAQV) traverse the membrane as a discontinuously helical segment. Trp255 is an iodide binding site. Met258 is a binding site for Na(+). The Cytoplasmic segment spans residues 267 to 278 (QRYVACHTEGKA). A helical transmembrane segment spans residues 279 to 301 (KLALLVNQLGLFLIVASAACCGI). Residues 302 to 335 (VMFVYYKDCDPLLTGRISAPDQYMPLLVLDIFED) are Extracellular-facing. The chain crosses the membrane as a helical span at residues 336-363 (LPGVPGLFLACAYSGTLSTASTSINAMA). The Cytoplasmic portion of the chain corresponds to 364-386 (AVTVEDLIKPRMPGLAPRKLVFI). Residues 387–408 (SKGLSFIYGSACLTVAALSSLL) traverse the membrane as a helical segment. Residues 409–411 (GGG) lie on the Extracellular side of the membrane. The chain crosses the membrane as a helical span at residues 412-437 (VLQGSFTVMGVISGPLLGAFTLGMLL). Leu413 serves as a coordination point for iodide. Na(+)-binding residues include Ser416 and Phe417. Phe417 serves as a coordination point for iodide. At 438–441 (PACN) the chain is on the cytoplasmic side. A helical membrane pass occupies residues 442 to 465 (TPGVLSGLAAGLAVSLWVAVGATL). The Extracellular portion of the chain corresponds to 466–520 (YPPGEQTMGVLPTSAAGCTNDSVLLGPPGATNASNGIPSSGMDTGRPALADTFYA). N-linked (GlcNAc...) asparagine glycans are attached at residues Asn485 and Asn497. The helical transmembrane segment at 521-545 (ISYLYYGALGTLTTMLCGALISYLT) threads the bilayer. At 546-618 (GPTKRSSLGP…YLGHDVETNL (73 aa)) the chain is on the cytoplasmic side. Ser551 carries the post-translational modification Phosphoserine; by PKA. The interval 587–618 (EDIPAVTKKPPGLKPGAETHPLYLGHDVETNL) is disordered.

This sequence belongs to the sodium:solute symporter (SSF) (TC 2.A.21) family. In terms of assembly, monomer.

It localises to the cell membrane. The protein resides in the cytoplasm. The catalysed reaction is iodide(out) + 2 Na(+)(out) = iodide(in) + 2 Na(+)(in). It carries out the reaction chlorate(out) + 2 Na(+)(out) = chlorate(in) + 2 Na(+)(in). It catalyses the reaction thiocyanate(out) + 2 Na(+)(out) = thiocyanate(in) + 2 Na(+)(in). The enzyme catalyses nitrate(out) + 2 Na(+)(out) = nitrate(in) + 2 Na(+)(in). The catalysed reaction is selenocyanate(out) + 2 Na(+)(out) = selenocyanate(in) + 2 Na(+)(in). Its activity is regulated as follows. Perchlorate inhibits iodide transport activity. Oxyanions inhibit iodide transport activity by blocking the binding sites for iodide and one of the sodium ions. In terms of biological role, sodium:iodide symporter that mediates the transport of iodide into the thyroid gland. Can also mediate the transport of chlorate, thiocynate, nitrate and selenocynate. The sequence is that of Sodium/iodide cotransporter (Slc5a5) from Rattus norvegicus (Rat).